The following is a 409-amino-acid chain: Potassium channel subfamily K member 3 (409 aa).

At 1–8 (MKRQNVRT) the chain is on the cytoplasmic side. Residues 9–29 (LALIVCTFTYLLVGAAVFDAL) traverse the membrane as a helical segment. N-linked (GlcNAc...) asparagine glycosylation occurs at N53. An intramembrane region (pore-forming) is located at residues 78 to 101 (WRFAGSFYFAITVITTIGYGHAAP). The chain crosses the membrane as a helical span at residues 108-128 (VFCMFYALLGIPLTLVMFQSL). The Cytoplasmic segment spans residues 129–158 (GERINTFVRYLLHRAKRGLGMRHAEVSMAN). Residues 159 to 179 (MVLIGFVSCISTLCIGAAAFS) traverse the membrane as a helical segment. The segment at residues 184 to 207 (WTFFQAYYYCFITLTTIGFGDYVA) is an intramembrane region (pore-forming). A helical membrane pass occupies residues 223 to 243 (FSFVYILTGLTVIGAFLNLVV). Topologically, residues 244–409 (LRFMTMNAED…RGLMKRRSSV (166 aa)) are cytoplasmic.

It belongs to the two pore domain potassium channel (TC 1.A.1.8) family. As to quaternary structure, homodimer. Heterodimer with KCNK1. Heterodimer with KCNK9. Very strong expression in heart, also detected in kidney, brain, skin, testis, lung, skeletal muscle, small intestine and stomach. Not detected in liver, thymus or spleen. Expressed in adrenal glands mainly in zona glomerulosa and zona fasciculata of the cortex. Expressed at higher levels in brown and beige than in white adipocytes.

The protein localises to the cell membrane. It carries out the reaction K(+)(in) = K(+)(out). The catalysed reaction is Na(+)(in) = Na(+)(out). Activated by halothane and isoflurane. Inhibited by external acidification, diacylglycerol and anandamide. Inactivated by barium. Functionally, k(+) channel that conducts voltage-dependent outward rectifying currents upon membrane depolarization. Voltage sensing is coupled to K(+) electrochemical gradient in an 'ion flux gating' mode where outward but not inward ion flow opens the gate. Changes ion selectivity and becomes permeable to Na(+) ions in response to extracellular acidification. Protonation of the pH sensor His-98 stabilizes C-type inactivation conformation likely converting the channel from outward K(+)-conducting, to inward Na(+)-conducting to nonconductive state. Homo- and heterodimerizes to form functional channels with distinct regulatory and gating properties. Allows K(+) currents with fast-gating kinetics important for the repolarization and hyperpolarization phases of action potentials. In cerebellar granule cells, heteromeric KCNK3:KCNK9 channel may hyperpolarize the resting membrane potential to limit intrinsic neuronal excitability, but once the action potential threshold is reached, it may support high-frequency action potential firing and increased neuronal excitability. Dispensable for central chemosensory respiration i.e. breathing controlled by brainstem CO2/pH, it rather conducts pH-sensitive currents and controls the firing rate of serotonergic raphe neurons involved in potentiation of the respiratory chemoreflex. Additionally, imparts chemosensitivity to type 1 cells in carotid bodies which respond to a decrease in arterial oxygen pressure or an increase in carbon dioxide pressure or pH to initiate adaptive changes in pulmonary ventilation. In adrenal gland, contributes to the maintenance of a hyperpolarized resting membrane potential of aldosterone-producing cells at zona glomerulosa and limits aldosterone release as part of a regulatory mechanism that controls arterial blood pressure and electrolyte homeostasis. In brown adipocytes, mediates K(+) efflux that counteracts norepinephrine-induced membrane depolarization, limits Ca(2+) efflux and downstream cAMP and PKA signaling, ultimately attenuating lipid oxidation and adaptive thermogenesis. The chain is Potassium channel subfamily K member 3 from Mus musculus (Mouse).